The following is a 126-amino-acid chain: Methylglyoxal synthase (126 aa).

In terms of domain architecture, MGS-like spans 1–126 (MEKKIALIAH…LIKGFEGLNT (126 aa)). Substrate contacts are provided by residues His10, Lys14, 36–39 (TGTT), and 56–57 (SG). Asp62 serves as the catalytic Proton donor/acceptor. Position 89 (His89) interacts with substrate.

It belongs to the methylglyoxal synthase family.

The catalysed reaction is dihydroxyacetone phosphate = methylglyoxal + phosphate. In terms of biological role, catalyzes the formation of methylglyoxal from dihydroxyacetone phosphate. This is Methylglyoxal synthase from Borrelia garinii subsp. bavariensis (strain ATCC BAA-2496 / DSM 23469 / PBi) (Borreliella bavariensis).